A 159-amino-acid chain; its full sequence is uncharacterized protein (159 aa).

It localises to the mitochondrion. This is an uncharacterized protein from Arabidopsis thaliana (Mouse-ear cress).